The sequence spans 293 residues: Small ribosomal subunit protein uS5 (293 aa).

Positions 1-55 (MADDAGAAGGPGGPGGPGLGGRGGFRGGFGSGLRGRGRGRGRGRGRGRGARGGKA) are disordered. Ala-2 is modified (N-acetylalanine). Residues 7 to 34 (AAGGPGGPGGPGLGGRGGFRGGFGSGLR) show a composition bias toward gly residues. A run of 14 repeats spans residues 9–11 (GGP), 12–14 (GGP), 15–17 (GGP), 22–25 (RGGF), 26–29 (RGGF), 34–35 (RG), 36–37 (RG), 38–39 (RG), 40–41 (RG), 42–43 (RG), 44–45 (RG), 46–47 (RG), 48–49 (RG), and 51–52 (RG). Positions 9–17 (GGPGGPGGP) are 3 X 3 AA tandem repeats of G-G-P. A 2 X 4 AA tandem repeats of R-G-G-F region spans residues 22–29 (RGGFRGGF). A 9 X 2 AA tandem repeats of R-G region spans residues 34-52 (RGRGRGRGRGRGRGRGARG). A compositionally biased stretch (basic residues) spans 35-51 (GRGRGRGRGRGRGRGAR). Glycyl lysine isopeptide (Lys-Gly) (interchain with G-Cter in ubiquitin) cross-links involve residues Lys-54 and Lys-58. Positions 102 to 165 (LKDEVLKIMP…ILAKLSIVPV (64 aa)) constitute an S5 DRBM domain. Thr-252 is modified (phosphothreonine). Lys-263 carries the N6-acetyllysine modification. Position 264 is a phosphoserine (Ser-264). Thr-270 is modified (phosphothreonine). N6-acetyllysine; alternate is present on Lys-275. Residue Lys-275 forms a Glycyl lysine isopeptide (Lys-Gly) (interchain with G-Cter in SUMO1); alternate linkage. A Glycyl lysine isopeptide (Lys-Gly) (interchain with G-Cter in SUMO2); alternate cross-link involves residue Lys-275. Residue Lys-275 forms a Glycyl lysine isopeptide (Lys-Gly) (interchain with G-Cter in ubiquitin); alternate linkage. A Phosphoserine modification is found at Ser-281.

This sequence belongs to the universal ribosomal protein uS5 family. In terms of assembly, component of the small ribosomal subunit. Interacts with zinc finger protein ZNF277 (via zinc-finger domains); the interaction is direct; the interaction is extra-ribosomal. Interaction with ZNF277 competes with the binding of RPS2 to protein arginine methyltransferase PRMT3. Citrullinated by PADI4 in the Arg/Gly-rich region. Post-translationally, asymmetric arginine dimethylation by PRMT3 occurs at multiple sites in the Arg/Gly-rich region. In terms of processing, monoubiquitinated at Lys-54 and Lys-58 by RNF10 when a ribosome has stalled during translation, leading to its degradation by the proteasome. Deubiquitinated at Lys-54 and Lys-58 by USP10, preventing degradation by the proteasome and promoting 40S ribosome subunit recycling following ribosome dissociation.

It is found in the cytoplasm. It localises to the nucleus. The protein resides in the nucleolus. Its function is as follows. Component of the ribosome, a large ribonucleoprotein complex responsible for the synthesis of proteins in the cell. The small ribosomal subunit (SSU) binds messenger RNAs (mRNAs) and translates the encoded message by selecting cognate aminoacyl-transfer RNA (tRNA) molecules. The large subunit (LSU) contains the ribosomal catalytic site termed the peptidyl transferase center (PTC), which catalyzes the formation of peptide bonds, thereby polymerizing the amino acids delivered by tRNAs into a polypeptide chain. The nascent polypeptides leave the ribosome through a tunnel in the LSU and interact with protein factors that function in enzymatic processing, targeting, and the membrane insertion of nascent chains at the exit of the ribosomal tunnel. Plays a role in the assembly and function of the 40S ribosomal subunit. Mutations in this protein affects the control of translational fidelity. Involved in nucleolar processing of pre-18S ribosomal RNA and ribosome assembly. The protein is Small ribosomal subunit protein uS5 (Rps2) of Rattus norvegicus (Rat).